The following is a 398-amino-acid chain: Cell division protein FtsZ (398 aa).

Residues 24-28, 111-113, Glu154, Arg158, and Asp202 each bind GTP; these read GAGGN and GTG. Residues 333–381 are disordered; it reads GRNNKSETSPISQSEDSEKEKFKWPYSQSESTQDKTLETKPAEQVSEGA. Basic and acidic residues predominate over residues 364–373; it reads TQDKTLETKP.

Belongs to the FtsZ family. In terms of assembly, homodimer. Polymerizes to form a dynamic ring structure in a strictly GTP-dependent manner. Interacts directly with several other division proteins.

The protein resides in the cytoplasm. Essential cell division protein that forms a contractile ring structure (Z ring) at the future cell division site. The regulation of the ring assembly controls the timing and the location of cell division. One of the functions of the FtsZ ring is to recruit other cell division proteins to the septum to produce a new cell wall between the dividing cells. Binds GTP and shows GTPase activity. The protein is Cell division protein FtsZ of Wolbachia sp.